We begin with the raw amino-acid sequence, 291 residues long: Small ribosomal subunit protein uS2 (291 aa).

The disordered stretch occupies residues Lys241–Gln270. Residues Val251–Gln270 are compositionally biased toward polar residues.

This sequence belongs to the universal ribosomal protein uS2 family.

In Mycoplasma capricolum subsp. capricolum (strain California kid / ATCC 27343 / NCTC 10154), this protein is Small ribosomal subunit protein uS2.